A 125-amino-acid polypeptide reads, in one-letter code: Large ribosomal subunit protein eL8 (125 aa).

The protein belongs to the eukaryotic ribosomal protein eL8 family. Part of the 50S ribosomal subunit. Probably part of the RNase P complex.

The protein resides in the cytoplasm. Functionally, multifunctional RNA-binding protein that recognizes the K-turn motif in ribosomal RNA, the RNA component of RNase P, box H/ACA, box C/D and box C'/D' sRNAs. The polypeptide is Large ribosomal subunit protein eL8 (Nanoarchaeum equitans (strain Kin4-M)).